The chain runs to 122 residues: Large ribosomal subunit protein uL14 (122 aa).

Belongs to the universal ribosomal protein uL14 family. Part of the 50S ribosomal subunit. Forms a cluster with proteins L3 and L19. In the 70S ribosome, L14 and L19 interact and together make contacts with the 16S rRNA in bridges B5 and B8.

In terms of biological role, binds to 23S rRNA. Forms part of two intersubunit bridges in the 70S ribosome. The protein is Large ribosomal subunit protein uL14 of Staphylococcus aureus (strain MW2).